We begin with the raw amino-acid sequence, 245 residues long: Tyrosine recombinase XerD-like (245 aa).

In terms of domain architecture, Core-binding (CB) spans 1 to 72 (MITFISKFLA…AVNQFLFFLY (72 aa)). A Tyr recombinase domain is found at 90–245 (PLLTPAYQEV…PVTLEKYFKN (156 aa)). Catalysis depends on residues Lys-151 and Arg-210. Tyr-242 (O-(3'-phospho-DNA)-tyrosine intermediate) is an active-site residue.

It belongs to the 'phage' integrase family. XerD-like subfamily.

It is found in the cytoplasm. In terms of biological role, putative tyrosine recombinase. Not involved in the cutting and rejoining of the recombining DNA molecules on dif(SL) site. The sequence is that of Tyrosine recombinase XerD-like from Streptococcus mutans serotype c (strain ATCC 700610 / UA159).